Reading from the N-terminus, the 527-residue chain is DUF21 domain-containing protein At1g47330 (527 aa).

At 1–15 (MSSDIPCCGTTFSLY) the chain is on the extracellular side. Residues 8 to 191 (CGTTFSLYVV…GKGGDLTTDE (184 aa)) form the CNNM transmembrane domain. Residues 16–36 (VVIIIALVAFAGLMAGLTLGL) form a helical membrane-spanning segment. Residues 37–70 (MSLGLVDLEVLIKSGRPQDRINAGKIFPVVKNQH) lie on the Cytoplasmic side of the membrane. The helical transmembrane segment at 71-91 (LLLCTLLIGNSMAMEALPIFL) threads the bilayer. Topologically, residues 92–93 (DK) are extracellular. Residues 94–114 (IVPPWLAILLSVTLILVFGEI) traverse the membrane as a helical segment. Residues 115–126 (MPQAVCTRYGLK) lie on the Cytoplasmic side of the membrane. The helical transmembrane segment at 127–147 (VGAIMAPFVRVLLVLFFPISY) threads the bilayer. The Extracellular portion of the chain corresponds to 148–527 (PISKVLDWML…PKHEESTQTL (380 aa)). CBS domains are found at residues 210 to 271 (MTPI…EVPL), 274 to 334 (MSMR…TKDE), and 366 to 435 (KSEN…ILDE). 3 disordered regions span residues 307–335 (KDLDEQEQSPETSENGIERRKNKKTKDEL), 358–384 (ETGDAKSGKSENGEEQQGSGKTSLLAA), and 464–527 (ITQS…TQTL). Serine 315 carries the post-translational modification Phosphoserine. Basic and acidic residues predominate over residues 358–369 (ETGDAKSGKSEN). Positions 464-501 (ITQSSSGSTSPNQTSHMATPDSSPTTKPSNSSPTRKPS) are enriched in low complexity. Asparagine 475 carries an N-linked (GlcNAc...) asparagine glycan. Residues 502 to 515 (VSSPTREPSDSSHS) show a composition bias toward polar residues. The span at 518-527 (PKHEESTQTL) shows a compositional bias: basic and acidic residues.

It localises to the membrane. This chain is DUF21 domain-containing protein At1g47330 (CBSDUF7), found in Arabidopsis thaliana (Mouse-ear cress).